The primary structure comprises 544 residues: CTP synthase (544 aa).

The tract at residues 1–267 (MSKFVFVTGG…GDLLVSRLHL (267 aa)) is amidoligase domain. Ser13 contacts CTP. Ser13 is a binding site for UTP. An ATP-binding site is contributed by 14–19 (SVGKGI). Residue Tyr54 participates in L-glutamine binding. Asp71 is an ATP binding site. Asp71 and Glu141 together coordinate Mg(2+). Residues 148 to 150 (DIE), 188 to 193 (KTKPTQ), and Lys224 contribute to the CTP site. Residues 188-193 (KTKPTQ) and Lys224 contribute to the UTP site. One can recognise a Glutamine amidotransferase type-1 domain in the interval 299-534 (YVELKDAYYS…INAAKKVIRD (236 aa)). Gly354 serves as a coordination point for L-glutamine. Catalysis depends on Cys381, which acts as the Nucleophile; for glutamine hydrolysis. L-glutamine is bound by residues 382–385 (LGMQ), Glu405, and Arg462. Catalysis depends on residues His507 and Glu509.

The protein belongs to the CTP synthase family. Homotetramer.

It carries out the reaction UTP + L-glutamine + ATP + H2O = CTP + L-glutamate + ADP + phosphate + 2 H(+). The catalysed reaction is L-glutamine + H2O = L-glutamate + NH4(+). It catalyses the reaction UTP + NH4(+) + ATP = CTP + ADP + phosphate + 2 H(+). The protein operates within pyrimidine metabolism; CTP biosynthesis via de novo pathway; CTP from UDP: step 2/2. Allosterically activated by GTP, when glutamine is the substrate; GTP has no effect on the reaction when ammonia is the substrate. The allosteric effector GTP functions by stabilizing the protein conformation that binds the tetrahedral intermediate(s) formed during glutamine hydrolysis. Inhibited by the product CTP, via allosteric rather than competitive inhibition. In terms of biological role, catalyzes the ATP-dependent amination of UTP to CTP with either L-glutamine or ammonia as the source of nitrogen. Regulates intracellular CTP levels through interactions with the four ribonucleotide triphosphates. This is CTP synthase from Dehalococcoides mccartyi (strain ATCC BAA-2266 / KCTC 15142 / 195) (Dehalococcoides ethenogenes (strain 195)).